Here is a 532-residue protein sequence, read N- to C-terminus: Transcriptional regulatory protein RtcR (532 aa).

The 239-residue stretch at 186-424 (IATRNPHFNR…LSASVTRMAT (239 aa)) folds into the Sigma-54 factor interaction domain. Residues 215 to 222 (GPTGAGKS) and 281 to 290 (ANGGMLFLDE) contribute to the ATP site. Residues 485–504 (KSLSAAGRQLFDVSRQGKAS) constitute a DNA-binding region (H-T-H motif).

In terms of biological role, transcriptional repressor of the rtcAB genes. Interacts with sigma-54. The polypeptide is Transcriptional regulatory protein RtcR (rtcR) (Escherichia coli (strain K12)).